Reading from the N-terminus, the 294-residue chain is Autophagy protein 5 (294 aa).

K149 is covalently cross-linked (Glycyl lysine isopeptide (Lys-Gly) (interchain with G-Cter in ATG12)).

It belongs to the ATG5 family. Conjugated with ATG12. The ATG5-ATG12 conjugate forms a complex with several units of ATG16. The ATG12-ATG5 conjugate also associates with ATG3. Post-translationally, conjugated to ATG12; which is essential for autophagy. Conjugation with ATG12 involves ATG7 as an E1-like activating enzyme and ATG10 as an E2-like conjugating enzyme.

The protein resides in the preautophagosomal structure membrane. Involved in cytoplasm to vacuole transport (Cvt) and autophagic vesicle formation. Autophagy is essential for maintenance of amino acid levels and protein synthesis under nitrogen starvation. Required for selective autophagic degradation of the nucleus (nucleophagy). Also required for mitophagy, which eliminates defective or superfluous mitochondria in order to fulfill cellular energy requirements and prevent excess ROS production. Conjugation with ATG12, through a ubiquitin-like conjugating system involving ATG7 as an E1-like activating enzyme and ATG10 as an E2-like conjugating enzyme, is essential for its function. The ATG12-ATG5 conjugate acts as an E3-like enzyme which is required for lipidation of ATG8 and ATG8 association to the vesicle membranes. ATG12-ATG5 rearranges the ATG3 catalytic center and enhances its E2 activity. Plays a role in the regulation of filamentous growth and chronological longevity. This chain is Autophagy protein 5 (ATG5), found in Saccharomyces cerevisiae (strain YJM789) (Baker's yeast).